We begin with the raw amino-acid sequence, 1012 residues long: RNA-binding protein 26 (1012 aa).

Residue lysine 94 forms a Glycyl lysine isopeptide (Lys-Gly) (interchain with G-Cter in SUMO2) linkage. Residues 98-127 (LQHQEKDIKKEELTKEEEREKKFSRRLNHS) adopt a coiled-coil conformation. Lysine 106 participates in a covalent cross-link: Glycyl lysine isopeptide (Lys-Gly) (interchain with G-Cter in SUMO1); alternate. Lysine 106 participates in a covalent cross-link: Glycyl lysine isopeptide (Lys-Gly) (interchain with G-Cter in SUMO2); alternate. The span at 106-118 (KKEELTKEEEREK) shows a compositional bias: basic and acidic residues. A disordered region spans residues 106-236 (KKEELTKEEE…PLENNYTPVS (131 aa)). Serine 127 is subject to Phosphoserine. The span at 134–168 (RYRDNRSRDERKKDDRSRKRDYDRNPPRRDSYRDR) shows a compositional bias: basic and acidic residues. The segment covering 169 to 186 (YNRRRGRSRSYSRSRSRS) has biased composition (basic residues). 2 stretches are compositionally biased toward basic and acidic residues: residues 187 to 201 (WSKERLRDRDRDRSR) and 209 to 227 (RSRERDLVKPKYDLDRTDP). The C3H1-type zinc finger occupies 288–316 (PMPKKRCRDYDEKGFCMRGDMCPFDHGSD). Positions 334–388 (QPPVVEGPPPPGLPPPPPILTPPPVNLRPPVPPPGPLPPSLPPVTGPPPPLPPLQ) are enriched in pro residues. Disordered regions lie at residues 334-404 (QPPV…SSVP) and 465-520 (IGLT…NFNR). Over residues 394–404 (APPNSATSSVP) the composition is skewed to low complexity. Position 501 is a phosphoserine (serine 501). Lysine 515 carries the N6-acetyllysine modification. Serine 523 carries the phosphoserine modification. The region spanning 537 to 611 (TKLELRKVPP…RFIKVYWHRE (75 aa)) is the RRM 1 domain. Serine 621 carries the post-translational modification Phosphoserine. The segment at 647–667 (PVPSATTEPAEAQSATSELPQ) is disordered. Coiled coils occupy residues 724-800 (DNNE…KSTS) and 828-852 (KKMQAGEEVTELRRKYTELQLEAAK). The interval 858-889 (SGRGRGIHTRGRGTAHGRGRGRGRGRGVPGHA) is disordered. Positions 862–882 (RGIHTRGRGTAHGRGRGRGRG) are enriched in basic residues. In terms of domain architecture, RRM 2 spans 896 to 965 (RALEISAFTE…QDLKLAWNKP (70 aa)). The segment at 970-1012 (SAVDTEEAEPDEEEFQEESLVDDSLLQDDDEEEEDNESRSWRR) is disordered. Residues 973 to 1005 (DTEEAEPDEEEFQEESLVDDSLLQDDDEEEEDN) are compositionally biased toward acidic residues.

In terms of tissue distribution, expressed in testis and ovary.

Functionally, may be involved in the turnover of nuclear polyadenylated (pA+) RNA. In Mus musculus (Mouse), this protein is RNA-binding protein 26.